The primary structure comprises 379 residues: MSELSFDAPVWHHGKALRKGYTTGSCATAAAKVAALMVLRQHLIHQVSIVTPSGVTLCLNVESPHIEGQQAIAAIRKDGGDDVDATHGMLIFARVTLNDSGEITLTGGEGIGTVTRKGIGLPLGSAAINRTPRHTIESAVREAIGPARGADVEIFAPEGEVRAQKTYNSRLGILGGISIIGTTGIVTPMSEESWKRSLSLELEIKRASGLTRVILVPGNHGERFVREQMGVDTQAVVTMSNFVGYMIEEAVRLGFCQIVLVGHPGKLIKIAAGIFHTHSHIADARMETLVAHLALLGAPLELLTLVGDCDTTEAAMEHIEAYGFGHIYNHLARRICLRVMQMLRFTKTPPVCDAILFSFDNHILGSNRPVDEIAKELQC.

It belongs to the CbiD family.

It catalyses the reaction Co-precorrin-5B + S-adenosyl-L-methionine = Co-precorrin-6A + S-adenosyl-L-homocysteine. The protein operates within cofactor biosynthesis; adenosylcobalamin biosynthesis; cob(II)yrinate a,c-diamide from sirohydrochlorin (anaerobic route): step 6/10. Its function is as follows. Catalyzes the methylation of C-1 in cobalt-precorrin-5B to form cobalt-precorrin-6A. This is Cobalt-precorrin-5B C(1)-methyltransferase from Salmonella dublin (strain CT_02021853).